The sequence spans 444 residues: GTPase Der (444 aa).

2 consecutive EngA-type G domains span residues 2–167 and 173–349; these read LKVA…LKEI and FKFC…ENLN. GTP is bound by residues 8 to 15, 55 to 59, 118 to 121, 179 to 186, 226 to 230, and 291 to 294; these read GKPNVGKS, DTGGL, NKSE, GRPNVGKS, DTAGI, and NKWD. The KH-like domain maps to 350-434; that stretch reads LKFNSKILTD…PITLYFKNKT (85 aa).

It belongs to the TRAFAC class TrmE-Era-EngA-EngB-Septin-like GTPase superfamily. EngA (Der) GTPase family. Associates with the 50S ribosomal subunit.

Functionally, GTPase that plays an essential role in the late steps of ribosome biogenesis. This is GTPase Der from Malacoplasma penetrans (strain HF-2) (Mycoplasma penetrans).